The following is a 182-amino-acid chain: Pentatricopeptide repeat-containing protein At2g01360 (182 aa).

PPR repeat units follow at residues 30–64 (EKSAYLALAGNFLRSNELSKVIDVVKEMVKSQHSL), 65–95 (GVYHGAMLIHMLGFGRRPSLAAEALDLLPDD), and 98–132 (GLSAYTALMDVYISAGSPEKAMKILGEMREREIMP).

Belongs to the PPR family. P subfamily.

The sequence is that of Pentatricopeptide repeat-containing protein At2g01360 from Arabidopsis thaliana (Mouse-ear cress).